The primary structure comprises 297 residues: 33 kDa chaperonin (297 aa).

2 cysteine pairs are disulfide-bonded: cysteine 232-cysteine 234 and cysteine 266-cysteine 269.

It belongs to the HSP33 family. Under oxidizing conditions two disulfide bonds are formed involving the reactive cysteines. Under reducing conditions zinc is bound to the reactive cysteines and the protein is inactive.

It localises to the cytoplasm. Its function is as follows. Redox regulated molecular chaperone. Protects both thermally unfolding and oxidatively damaged proteins from irreversible aggregation. Plays an important role in the bacterial defense system toward oxidative stress. The polypeptide is 33 kDa chaperonin (Pseudomonas aeruginosa (strain UCBPP-PA14)).